A 612-amino-acid polypeptide reads, in one-letter code: Phosphopentomutase (612 aa).

Ala-2 carries the N-acetylalanine modification. Alpha-D-glucose 1,6-bisphosphate contacts are provided by Arg-63 and Ser-165. The active-site Phosphoserine intermediate is the Ser-165. Mg(2+)-binding residues include Ser-165, Asp-322, Asp-324, and Asp-326. Phosphoserine is present on Ser-165. The alpha-D-glucose 1,6-bisphosphate site is built by Asp-326, Arg-327, Thr-400, Glu-424, and Lys-438.

The protein belongs to the phosphohexose mutase family. In terms of assembly, monomer. Mg(2+) serves as cofactor.

Its subcellular location is the cytoplasm. It is found in the cytosol. The catalysed reaction is alpha-D-ribose 1-phosphate = D-ribose 5-phosphate. It carries out the reaction 2-deoxy-alpha-D-ribose 1-phosphate = 2-deoxy-D-ribose 5-phosphate. The enzyme catalyses alpha-D-glucose 1-phosphate = alpha-D-glucose 6-phosphate. It catalyses the reaction O-phospho-L-seryl-[protein] + alpha-D-glucose 1-phosphate = alpha-D-glucose 1,6-bisphosphate + L-seryl-[protein]. The catalysed reaction is alpha-D-glucose 1,6-bisphosphate + L-seryl-[protein] = O-phospho-L-seryl-[protein] + alpha-D-glucose 6-phosphate. Catalyzes the conversion of the nucleoside breakdown products ribose-1-phosphate and deoxyribose-1-phosphate to the corresponding 5-phosphopentoses. Catalyzes the reversible isomerization of alpha-D-glucose 1-phosphate to alpha-D-glucose 6-phosphate but with a lower catalytic efficiency. The mechanism proceeds via the intermediate compound alpha-D-glucose 1,6-bisphosphate. In vitro, also has a low glucose 1,6-bisphosphate synthase activity which is most probably not physiologically relevant. This is Phosphopentomutase (PGM2) from Pongo abelii (Sumatran orangutan).